The chain runs to 256 residues: Major prion protein (256 aa).

The first 24 residues, 1–24, serve as a signal peptide directing secretion; it reads MVKSHIGSWILVLFVAMWSDVGLC. Residues 25–233 are interaction with GRB2, ERI3 and SYN1; it reads KKRPKPGGGW…ESQAYYQRGA (209 aa). A disordered region spans residues 28–110; it reads PKPGGGWNTG…QWNKPSKPKT (83 aa). 5 tandem repeats follow at residues 54–62, 63–70, 71–78, 79–86, and 87–95. The tract at residues 54 to 95 is 5 X 8 AA tandem repeats of P-H-G-G-G-W-G-Q; it reads PQGGGGWGQPHGGGWGQPHGGGWGQPHGGGWGQPHGGGGWGQ. The segment covering 55-97 has biased composition (gly residues); that stretch reads QGGGGWGQPHGGGWGQPHGGGWGQPHGGGWGQPHGGGGWGQGG. Histidine 64, glycine 65, glycine 66, histidine 72, glycine 73, glycine 74, histidine 80, glycine 81, glycine 82, histidine 88, glycine 90, and glycine 91 together coordinate Cu(2+). A disulfide bridge connects residues cysteine 182 and cysteine 217. Asparagine 184 and asparagine 200 each carry an N-linked (GlcNAc...) (complex) asparagine glycan. Alanine 233 is lipidated: GPI-anchor amidated alanine. Residues 234–256 constitute a propeptide, removed in mature form; that stretch reads SVILFSSPPVILLISFLIFLIVG.

It belongs to the prion family. Monomer and homodimer. Has a tendency to aggregate into amyloid fibrils containing a cross-beta spine, formed by a steric zipper of superposed beta-strands. Soluble oligomers may represent an intermediate stage on the path to fibril formation. Copper binding may promote oligomerization. Interacts with GRB2, APP, ERI3/PRNPIP and SYN1. Mislocalized cytosolically exposed PrP interacts with MGRN1; this interaction alters MGRN1 subcellular location and causes lysosomal enlargement. Interacts with KIAA1191.

Its subcellular location is the cell membrane. The protein resides in the golgi apparatus. Its function is as follows. Its primary physiological function is unclear. Has cytoprotective activity against internal or environmental stresses. May play a role in neuronal development and synaptic plasticity. May be required for neuronal myelin sheath maintenance. May play a role in iron uptake and iron homeostasis. Soluble oligomers are toxic to cultured neuroblastoma cells and induce apoptosis (in vitro). Association with GPC1 (via its heparan sulfate chains) targets PRNP to lipid rafts. Also provides Cu(2+) or Zn(2+) for the ascorbate-mediated GPC1 deaminase degradation of its heparan sulfate side chains. The sequence is that of Major prion protein (PRNP) from Ovis aries (Sheep).